The following is a 222-amino-acid chain: N-acetyltransferase 8 (222 aa).

At 1–35 the chain is on the cytoplasmic side; sequence MASFHIRQFQERDYEQVVDMFSRGMKEHIPTAFRH. The chain crosses the membrane as a helical; Signal-anchor for type II membrane protein span at residues 36-56; that stretch reads LLLLPRTLLLLLGVPLALVLV. At 57–222 the chain is on the lumenal side; the sequence is SGSWLLAVVC…IHFIYPLPSS (166 aa). Residues 62-217 enclose the N-acetyltransferase domain; the sequence is LAVVCIFFLL…VDVSLIHFIY (156 aa).

Belongs to the NAT8 family.

The protein localises to the endoplasmic reticulum-Golgi intermediate compartment membrane. It is found in the endoplasmic reticulum membrane. The catalysed reaction is L-lysyl-[protein] + acetyl-CoA = N(6)-acetyl-L-lysyl-[protein] + CoA + H(+). It catalyses the reaction an S-substituted L-cysteine + acetyl-CoA = an N-acetyl-L-cysteine-S-conjugate + CoA + H(+). Its pathway is sulfur metabolism; glutathione metabolism. In terms of biological role, endoplasmic reticulum-membrane(ER)-bound lysine N-acetyltransferase catalyzing the N6-acetylation of lysine residues in the lumen of the ER in various proteins, including PROM1 and BACE1, using acetyl-CoA as acetyl donor. Thereby, may regulate apoptosis through the acetylation and the regulation of the expression of PROM1. May also regulate amyloid beta-peptide secretion through acetylation of BACE1 and the regulation of its expression in neurons. N(6)-lysine acetylation in the ER maintains protein homeostasis and regulates reticulophagy. Alternatively, acetylates the free alpha-amino group of cysteine S-conjugates to form mercapturic acids. This is the final step in a major route for detoxification of a wide variety of reactive electrophiles which starts with their incorporation into glutathione S-conjugates. The glutathione S-conjugates are then further processed into cysteine S-conjugates and finally mercapturic acids which are water soluble and can be readily excreted in urine or bile. This Rattus norvegicus (Rat) protein is N-acetyltransferase 8 (Nat8).